A 472-amino-acid chain; its full sequence is Glutamyl-tRNA(Gln) amidotransferase subunit A (472 aa).

Active-site charge relay system residues include Lys-69 and Ser-144. The Acyl-ester intermediate role is filled by Ser-168.

It belongs to the amidase family. GatA subfamily. In terms of assembly, heterotrimer of A, B and C subunits.

The catalysed reaction is L-glutamyl-tRNA(Gln) + L-glutamine + ATP + H2O = L-glutaminyl-tRNA(Gln) + L-glutamate + ADP + phosphate + H(+). Its function is as follows. Allows the formation of correctly charged Gln-tRNA(Gln) through the transamidation of misacylated Glu-tRNA(Gln) in organisms which lack glutaminyl-tRNA synthetase. The reaction takes place in the presence of glutamine and ATP through an activated gamma-phospho-Glu-tRNA(Gln). The sequence is that of Glutamyl-tRNA(Gln) amidotransferase subunit A from Sulfurisphaera tokodaii (strain DSM 16993 / JCM 10545 / NBRC 100140 / 7) (Sulfolobus tokodaii).